The chain runs to 385 residues: Histidinol-phosphate aminotransferase (385 aa).

K235 carries the N6-(pyridoxal phosphate)lysine modification.

This sequence belongs to the class-II pyridoxal-phosphate-dependent aminotransferase family. Histidinol-phosphate aminotransferase subfamily. As to quaternary structure, homodimer. It depends on pyridoxal 5'-phosphate as a cofactor.

It carries out the reaction L-histidinol phosphate + 2-oxoglutarate = 3-(imidazol-4-yl)-2-oxopropyl phosphate + L-glutamate. It participates in amino-acid biosynthesis; L-histidine biosynthesis; L-histidine from 5-phospho-alpha-D-ribose 1-diphosphate: step 7/9. The chain is Histidinol-phosphate aminotransferase from Nocardia farcinica (strain IFM 10152).